The sequence spans 216 residues: Kynurenine formamidase (216 aa).

Phe-21 lines the substrate pocket. Residues His-51, His-55, and Asp-57 each coordinate Zn(2+). His-61 functions as the Proton donor/acceptor in the catalytic mechanism. The Zn(2+) site is built by His-167 and Glu-179.

It belongs to the Cyclase 1 superfamily. KynB family. Homodimer. Zn(2+) serves as cofactor.

It carries out the reaction N-formyl-L-kynurenine + H2O = L-kynurenine + formate + H(+). Its pathway is amino-acid degradation; L-tryptophan degradation via kynurenine pathway; L-kynurenine from L-tryptophan: step 2/2. Catalyzes the hydrolysis of N-formyl-L-kynurenine to L-kynurenine, the second step in the kynurenine pathway of tryptophan degradation. The sequence is that of Kynurenine formamidase from Paracidovorax citrulli (strain AAC00-1) (Acidovorax citrulli).